A 518-amino-acid chain; its full sequence is 3-phosphoshikimate 1-carboxyvinyltransferase 1, chloroplastic (518 aa).

The transit peptide at 1 to 74 (MAQISSMGQG…RISASVVTAQ (74 aa)) directs the protein to the chloroplast. Positions 97, 98, and 102 each coordinate 3-phosphoshikimate. Lys-97 contributes to the phosphoenolpyruvate binding site. Positions 175 and 205 each coordinate phosphoenolpyruvate. The 3-phosphoshikimate site is built by Ser-252, Ser-253, Gln-254, Ser-280, Asp-405, and Lys-432. A phosphoenolpyruvate-binding site is contributed by Gln-254. Asp-405 serves as the catalytic Proton acceptor. Phosphoenolpyruvate-binding residues include Arg-436, Arg-478, and Lys-503.

The protein belongs to the EPSP synthase family.

It localises to the plastid. It is found in the chloroplast. It carries out the reaction 3-phosphoshikimate + phosphoenolpyruvate = 5-O-(1-carboxyvinyl)-3-phosphoshikimate + phosphate. The protein operates within metabolic intermediate biosynthesis; chorismate biosynthesis; chorismate from D-erythrose 4-phosphate and phosphoenolpyruvate: step 6/7. Its function is as follows. Catalyzes the transfer of the enolpyruvyl moiety of phosphoenolpyruvate (PEP) to the 5-hydroxyl of shikimate-3-phosphate (S3P) to produce enolpyruvyl shikimate-3-phosphate and inorganic phosphate. In Nicotiana tabacum (Common tobacco), this protein is 3-phosphoshikimate 1-carboxyvinyltransferase 1, chloroplastic (EPSPS-1).